The chain runs to 301 residues: MASRYVAVGMMLSQTVVGVLGSFSLLLHYLSLHYIGCRLRSADLIVKHLIAASFLTLLCKGVPQTMAAFRVRYFLNAIGCKLVFYLHRVGRGVSTGTTCLLSVFQVITVSSRKSRWAKLKEKAPKHVGFSVLLCWILCMLVNIIFPIYVTGKRNHTNITVNKDLGDCCGRGNNKIAQTLRAMLLSFPDVLCLGFMLWASSSMVCILHRHKQRVQHIHRSNLSPRASPENRATQSILIPVSTFVSSYTLSCLLQVCMALLDNPNSLLVNTSALMSACFPTLSPFVLMSCDPSVYRLCFAWKR.

Over 1-15 (MASRYVAVGMMLSQT) the chain is Extracellular. Residues 16–36 (VVGVLGSFSLLLHYLSLHYIG) form a helical membrane-spanning segment. Residues 37-48 (CRLRSADLIVKH) are Cytoplasmic-facing. Residues 49–69 (LIAASFLTLLCKGVPQTMAAF) traverse the membrane as a helical segment. Topologically, residues 70–88 (RVRYFLNAIGCKLVFYLHR) are extracellular. The helical transmembrane segment at 89 to 107 (VGRGVSTGTTCLLSVFQVI) threads the bilayer. The Cytoplasmic segment spans residues 108–126 (TVSSRKSRWAKLKEKAPKH). Residues 127-147 (VGFSVLLCWILCMLVNIIFPI) traverse the membrane as a helical segment. The Extracellular segment spans residues 148 to 185 (YVTGKRNHTNITVNKDLGDCCGRGNNKIAQTLRAMLLS). N-linked (GlcNAc...) asparagine glycosylation is found at N154 and N157. A helical membrane pass occupies residues 186 to 206 (FPDVLCLGFMLWASSSMVCIL). At 207–234 (HRHKQRVQHIHRSNLSPRASPENRATQS) the chain is on the cytoplasmic side. The helical transmembrane segment at 235 to 255 (ILIPVSTFVSSYTLSCLLQVC) threads the bilayer. The Extracellular segment spans residues 256–264 (MALLDNPNS). Residues 265 to 285 (LLVNTSALMSACFPTLSPFVL) traverse the membrane as a helical segment. At 286-301 (MSCDPSVYRLCFAWKR) the chain is on the cytoplasmic side.

It belongs to the G-protein coupled receptor 1 family.

Its subcellular location is the cell membrane. In terms of biological role, putative pheromone receptor. The protein is Vomeronasal type-1 receptor 4 (VN1R4) of Pongo pygmaeus (Bornean orangutan).